The sequence spans 520 residues: Laccase (520 aa).

A signal peptide spans 1–21; the sequence is MHTFLRSTALVVAGLSARALA. 2 consecutive Plastocyanin-like domains span residues 22–148 and 160–304; these read SIGP…FVVY and VDDD…ILRY. An N-linked (GlcNAc...) asparagine glycan is attached at Asn-75. Cu cation-binding residues include His-85, His-87, His-130, and His-132. Disulfide bonds link Cys-106–Cys-509 and Cys-138–Cys-227. N-linked (GlcNAc...) asparagine glycans are attached at residues Asn-352 and Asn-402. Positions 373-496 constitute a Plastocyanin-like 3 domain; that stretch reads TVPVLLQILS…VFAEDIPDVA (124 aa). Cu cation is bound by residues His-418, His-421, His-423, His-473, Cys-474, His-475, and His-479.

It belongs to the multicopper oxidase family. Cu cation serves as cofactor.

It is found in the secreted. It catalyses the reaction 4 hydroquinone + O2 = 4 benzosemiquinone + 2 H2O. Its function is as follows. Lignin degradation and detoxification of lignin-derived products. The polypeptide is Laccase (LAC) (Phlebia radiata (White-rot fungus)).